The chain runs to 56 residues: Small ribosomal subunit protein bS21 (56 aa).

The protein belongs to the bacterial ribosomal protein bS21 family.

The chain is Small ribosomal subunit protein bS21 from Synechococcus sp. (strain WH7803).